The sequence spans 378 residues: Erythronate-4-phosphate dehydrogenase (378 aa).

2 residues coordinate substrate: serine 45 and threonine 66. The NAD(+) site is built by aspartate 146 and threonine 175. Arginine 208 is a catalytic residue. Aspartate 232 serves as a coordination point for NAD(+). Residue glutamate 237 is part of the active site. Histidine 254 acts as the Proton donor in catalysis. Residue glycine 257 coordinates NAD(+). Tyrosine 258 contacts substrate.

The protein belongs to the D-isomer specific 2-hydroxyacid dehydrogenase family. PdxB subfamily. As to quaternary structure, homodimer.

The protein localises to the cytoplasm. The catalysed reaction is 4-phospho-D-erythronate + NAD(+) = (R)-3-hydroxy-2-oxo-4-phosphooxybutanoate + NADH + H(+). Its pathway is cofactor biosynthesis; pyridoxine 5'-phosphate biosynthesis; pyridoxine 5'-phosphate from D-erythrose 4-phosphate: step 2/5. Its function is as follows. Catalyzes the oxidation of erythronate-4-phosphate to 3-hydroxy-2-oxo-4-phosphonooxybutanoate. This Citrobacter koseri (strain ATCC BAA-895 / CDC 4225-83 / SGSC4696) protein is Erythronate-4-phosphate dehydrogenase.